The primary structure comprises 363 residues: Type-1 angiotensin II receptor B (363 aa).

Topologically, residues 1–27 are extracellular; it reads MLSNISAGENSEVEKIVVKCSKSGMHN. An N-linked (GlcNAc...) asparagine glycan is attached at asparagine 4. 2 disulfide bridges follow: cysteine 20-cysteine 274 and cysteine 103-cysteine 182. Residues 28–57 form a helical membrane-spanning segment; the sequence is YIFITIPIIYSTIFVVGVFGNSLVVIVIYS. The Cytoplasmic portion of the chain corresponds to 58 to 63; it reads YMKMKT. Residues 64 to 91 traverse the membrane as a helical segment; that stretch reads MASVFLMNLALSDLCFVITLPLWAVYTA. At 92-100 the chain is on the extracellular side; the sequence is MHYHWPFGD. A helical transmembrane segment spans residues 101–127; the sequence is LLCKIASTAITLNLYTTVFLLTCLSID. The Cytoplasmic segment spans residues 128–143; that stretch reads RYSAIVHPMKSRIRRT. The chain crosses the membrane as a helical span at residues 144–167; it reads VMVARLTCVGIWLVAFLASLPSVI. Residues 168–192 lie on the Extracellular side of the membrane; sequence YRQIFIFPDTNQTVCALVYHSGHIY. Arginine 169 contributes to the angiotensin II binding site. Asparagine 178 is a glycosylation site (N-linked (GlcNAc...) asparagine). Tyrosine 186 and lysine 201 together coordinate angiotensin II. The helical transmembrane segment at 193-218 threads the bilayer; the sequence is FMVGMSLVKNIVGFFIPFVIILTSYT. Residues 219–239 lie on the Cytoplasmic side of the membrane; sequence LIGKTLKEVYRAQRARNDDIF. A helical membrane pass occupies residues 240–268; that stretch reads KMIVAVVLLFFFCWIPHQVFTFLDVLIQM. Residues 269 to 278 lie on the Extracellular side of the membrane; that stretch reads DVIQNCKMYD. A helical membrane pass occupies residues 279 to 304; the sequence is IVDTGMPITICIAYFNSCLNPFLYGF. Over 305–363 the chain is Cytoplasmic; it reads FGKKFRKHFLQLIKYIPPKMRTHASVNTKSSTVSQRLSDTKCASNKIALWIFDIEEHCK. Residues cysteine 346 and cysteine 362 are each lipidated (S-palmitoyl cysteine).

The protein belongs to the G-protein coupled receptor 1 family. Post-translationally, C-terminal Ser or Thr residues may be phosphorylated. Heart membranes, follicular oocytes.

It is found in the cell membrane. In terms of biological role, receptor for angiotensin II, a vasoconstricting peptide, which acts as a key regulator of blood pressure and sodium retention by the kidney. The activated receptor in turn couples to G-alpha proteins G(q) (GNAQ, GNA11, GNA14 or GNA15) and thus activates phospholipase C and increases the cytosolic Ca(2+) concentrations, which in turn triggers cellular responses such as stimulation of protein kinase C. This is Type-1 angiotensin II receptor B (agtr1-b) from Xenopus laevis (African clawed frog).